Here is a 749-residue protein sequence, read N- to C-terminus: Amyloid-beta A4 precursor protein-binding family A member 2 (749 aa).

Disordered stretches follow at residues Met-1–Glu-94, Asp-130–Glu-220, and Ser-238–Glu-344. Ser-11 carries the phosphoserine modification. A compositionally biased stretch (polar residues) spans Gly-70–Thr-80. Composition is skewed to acidic residues over residues Ser-81–Glu-94 and Thr-131–Thr-142. An STXBP1-binding region spans residues His-185 to Ala-270. Position 208 is a phosphoserine (Ser-208). The segment covering Ser-238 to Glu-247 has biased composition (polar residues). Basic and acidic residues predominate over residues Arg-305 to His-315. In terms of domain architecture, PID spans Asp-368–Asp-555. PDZ domains follow at residues Glu-568 to Cys-654 and Thr-659 to Ala-734.

As to quaternary structure, part of a multimeric complex containing STXBP1 and syntaxin-1. Binds to the cytoplasmic domain of amyloid-beta protein, and to the nuclear factor NF-kappa-B/p65 via its PDZ domain. Interacts with the N-terminal domain of NECAB3. Brain.

In terms of biological role, putative function in synaptic vesicle exocytosis by binding to STXBP1, an essential component of the synaptic vesicle exocytotic machinery. May modulate processing of the amyloid-beta precursor protein (APP) and hence formation of APP-beta. The polypeptide is Amyloid-beta A4 precursor protein-binding family A member 2 (APBA2) (Homo sapiens (Human)).